We begin with the raw amino-acid sequence, 318 residues long: MAPVTPDAVNARQQRPADPALRRLMHPHHRNYTASKASAHSVKSVSRCGKSRSELGRMERVGSVARSICSRHTRHGVDRSHFSLRDFFRGISANFELGKDFLREMNTPIHVSEAVFLPLSLCTLSPGRCLRLSPFGHSLTLGSHCEICINRSQVHVPQEFSSTQLSFFNNVHKIIPNKTFYVSLLSSSPSAVKAGLSQPSLLYAYLVTGHFCGTICPIFSTNGKGRLIMHLLLQGTSLHIPETCLKLLCENIGPTYELAVDLVGDAFCIKVSPRDTVYEKAVNVDEDAIYEAIKDLECGDELRLQIINYTQLILENKQ.

Residues Cys129–His239 form a CCCH-type zinc finger.

It belongs to the herpesviridae NEC1 protein family. As to quaternary structure, forms a heterodimeric viral nuclear egress complex (NEC) with NEC2. Interacts with capsid vertex specific component 2/CVC2; this interaction directs the capsid to the host inner nuclear membrane to initiate budding. Phosphorylated at serine residues in the N-terminus. This phosphorylation regulates the localization within the inner nuclear membrane.

The protein localises to the host nucleus inner membrane. In terms of biological role, plays an essential role in virion nuclear egress, the first step of virion release from infected cell. Within the host nucleus, NEC1 interacts with the newly formed capsid through the vertexes and directs it to the inner nuclear membrane by associating with NEC2. Induces the budding of the capsid at the inner nuclear membrane as well as its envelopment into the perinuclear space. There, the NEC1/NEC2 complex promotes the fusion of the enveloped capsid with the outer nuclear membrane and the subsequent release of the viral capsid into the cytoplasm where it will reach the secondary budding sites in the host Golgi or trans-Golgi network. This chain is Nuclear egress protein 1, found in Homo sapiens (Human).